Here is a 349-residue protein sequence, read N- to C-terminus: Holliday junction branch migration complex subunit RuvB (349 aa).

Residues 1 to 15 show a composition bias toward basic and acidic residues; that stretch reads MSDDYRETDPTRQPE. The interval 1-25 is disordered; the sequence is MSDDYRETDPTRQPEDMGEGSLRPE. The large ATPase domain (RuvB-L) stretch occupies residues 1 to 183; it reads MSDDYRETDP…FGIPLRLVFY (183 aa). ATP contacts are provided by residues Leu-22, Arg-23, Gly-64, Lys-67, Thr-68, Thr-69, 130–132, Arg-173, Tyr-183, and Arg-220; that span reads EDF. Thr-68 contacts Mg(2+). The segment at 184–254 is small ATPAse domain (RuvB-S); the sequence is TPEELRAIVS…LADAALGRLE (71 aa). The segment at 257 to 349 is head domain (RuvB-H); that stretch reads ERGLDAMDRR…SSLEQDDSAP (93 aa). DNA contacts are provided by Arg-293, Arg-312, and Arg-317.

It belongs to the RuvB family. As to quaternary structure, homohexamer. Forms an RuvA(8)-RuvB(12)-Holliday junction (HJ) complex. HJ DNA is sandwiched between 2 RuvA tetramers; dsDNA enters through RuvA and exits via RuvB. An RuvB hexamer assembles on each DNA strand where it exits the tetramer. Each RuvB hexamer is contacted by two RuvA subunits (via domain III) on 2 adjacent RuvB subunits; this complex drives branch migration. In the full resolvosome a probable DNA-RuvA(4)-RuvB(12)-RuvC(2) complex forms which resolves the HJ.

It localises to the cytoplasm. It carries out the reaction ATP + H2O = ADP + phosphate + H(+). In terms of biological role, the RuvA-RuvB-RuvC complex processes Holliday junction (HJ) DNA during genetic recombination and DNA repair, while the RuvA-RuvB complex plays an important role in the rescue of blocked DNA replication forks via replication fork reversal (RFR). RuvA specifically binds to HJ cruciform DNA, conferring on it an open structure. The RuvB hexamer acts as an ATP-dependent pump, pulling dsDNA into and through the RuvAB complex. RuvB forms 2 homohexamers on either side of HJ DNA bound by 1 or 2 RuvA tetramers; 4 subunits per hexamer contact DNA at a time. Coordinated motions by a converter formed by DNA-disengaged RuvB subunits stimulates ATP hydrolysis and nucleotide exchange. Immobilization of the converter enables RuvB to convert the ATP-contained energy into a lever motion, pulling 2 nucleotides of DNA out of the RuvA tetramer per ATP hydrolyzed, thus driving DNA branch migration. The RuvB motors rotate together with the DNA substrate, which together with the progressing nucleotide cycle form the mechanistic basis for DNA recombination by continuous HJ branch migration. Branch migration allows RuvC to scan DNA until it finds its consensus sequence, where it cleaves and resolves cruciform DNA. This Gluconobacter oxydans (strain 621H) (Gluconobacter suboxydans) protein is Holliday junction branch migration complex subunit RuvB.